Reading from the N-terminus, the 338-residue chain is Nicotinate-nucleotide--dimethylbenzimidazole phosphoribosyltransferase (338 aa).

E306 (proton acceptor) is an active-site residue.

This sequence belongs to the CobT family.

It catalyses the reaction 5,6-dimethylbenzimidazole + nicotinate beta-D-ribonucleotide = alpha-ribazole 5'-phosphate + nicotinate + H(+). It functions in the pathway nucleoside biosynthesis; alpha-ribazole biosynthesis; alpha-ribazole from 5,6-dimethylbenzimidazole: step 1/2. Functionally, catalyzes the synthesis of alpha-ribazole-5'-phosphate from nicotinate mononucleotide (NAMN) and 5,6-dimethylbenzimidazole (DMB). The chain is Nicotinate-nucleotide--dimethylbenzimidazole phosphoribosyltransferase from Cereibacter sphaeroides (strain ATCC 17023 / DSM 158 / JCM 6121 / CCUG 31486 / LMG 2827 / NBRC 12203 / NCIMB 8253 / ATH 2.4.1.) (Rhodobacter sphaeroides).